The sequence spans 486 residues: Maintenance of mitochondrial morphology protein 1 (486 aa).

Over 1-19 the chain is Lumenal; that stretch reads MSNDTSAQPAQSSLSFTQG. A helical membrane pass occupies residues 20–40; that stretch reads LLVGQLSVVLLIGAFIKFFIF. Residues 41-486 are Cytoplasmic-facing; sequence GEASPSSSRS…GSLPDVVPVT (446 aa). 4 disordered regions span residues 45 to 98, 269 to 318, 393 to 412, and 420 to 486; these read PSSS…RSIL, QTST…AGTT, VRGQEEQQEVGSSGNAGVST, and ARDA…VPVT. Positions 51–61 are enriched in basic residues; the sequence is QTRRTSPHKRS. Positions 70–79 are enriched in basic and acidic residues; that stretch reads LGSRSLKEKP. 4 stretches are compositionally biased toward polar residues: residues 80–96, 269–291, 307–318, and 401–412; these read SSNVLRPVPSSSTNTRS, QTSTHLATSPSNIDPTLQTNDYS, EQATQANNAGTT, and EVGSSGNAGVST. Positions 125–382 constitute an SMP-LTD domain; that stretch reads QPESLDWFNV…EPRVQVVALP (258 aa). Basic and acidic residues-rich tracts occupy residues 429–440 and 462–473; these read HATRDADMEGLR and DSREQACRDDPF.

This sequence belongs to the MMM1 family. As to quaternary structure, homodimer. Component of the ER-mitochondria encounter structure (ERMES) or MDM complex, composed of MMM1, MDM10, MDM12 and MDM34. An MMM1 homodimer associates with one molecule of MDM12 on each side in a pairwise head-to-tail manner, and the SMP-LTD domains of MMM1 and MDM12 generate a continuous hydrophobic tunnel for phospholipid trafficking.

Its subcellular location is the endoplasmic reticulum membrane. In terms of biological role, component of the ERMES/MDM complex, which serves as a molecular tether to connect the endoplasmic reticulum (ER) and mitochondria. Components of this complex are involved in the control of mitochondrial shape and protein biogenesis, and function in nonvesicular lipid trafficking between the ER and mitochondria. The MDM12-MMM1 subcomplex functions in the major beta-barrel assembly pathway that is responsible for biogenesis of all outer membrane beta-barrel proteins, and acts in a late step after the SAM complex. The MDM10-MDM12-MMM1 subcomplex further acts in the TOM40-specific pathway after the action of the MDM12-MMM1 complex. Essential for establishing and maintaining the structure of mitochondria and maintenance of mtDNA nucleoids. This is Maintenance of mitochondrial morphology protein 1 from Coccidioides immitis (strain RS) (Valley fever fungus).